The sequence spans 190 residues: MAEKTQKSVKIAPGAVVCVESEIRGDVTIGPRTVIHPKARIIAEAGPIVIGEGNLIEEQALIINAYPDNITPDTEDPEPKPMIIGTNNVFEVGCYSQAMKMGDNNVIESKAYVGRNVILTSGCIIGACCNLNTFEVIPENTVIYGADCLRRVQTERPQPQTLQLDFLMKILPNYHHLKKTMKGSSTPVKN.

At T186 the chain carries Phosphothreonine; by CDK1.

The protein belongs to the dynactin subunits 5/6 family. Dynactin subunit 6 subfamily. Subunit of dynactin, a multiprotein complex part of a tripartite complex with dynein and a adapter, such as BICDL1, BICD2 or HOOK3. The dynactin complex is built around ACTR1A/ACTB filament and consists of an actin-related filament composed of a shoulder domain, a pointed end and a barbed end. Its length is defined by its flexible shoulder domain. The soulder is composed of 2 DCTN1 subunits, 4 DCTN2 and 2 DCTN3. The 4 DCNT2 (via N-terminus) bind the ACTR1A filament and act as molecular rulers to determine the length. The pointed end is important for binding dynein-dynactin cargo adapters. Consists of 4 subunits: ACTR10, DCNT4, DCTN5 and DCTN6. Within the complex DCTN6 forms a heterodimer with DCTN5. The barbed end is composed of a CAPZA1:CAPZB heterodimers, which binds ACTR1A/ACTB filament and dynactin and stabilizes dynactin. Interacts with PLK1. Interacts with N4BP2L1. Post-translationally, phosphorylation at Thr-186 by CDK1 during mitotic prometaphase creates a binding site for PLK1 that facilitates its recruitment to kinetochores. In terms of tissue distribution, ubiquitous.

It localises to the cytoplasm. The protein resides in the cytoskeleton. The protein localises to the chromosome. Its subcellular location is the centromere. It is found in the kinetochore. Its function is as follows. Part of the dynactin complex that activates the molecular motor dynein for ultra-processive transport along microtubules. This chain is Dynactin subunit 6, found in Homo sapiens (Human).